A 363-amino-acid chain; its full sequence is Chorismate synthase (363 aa).

R48 serves as a coordination point for NADP(+). Residues 125–127, 238–239, G278, 293–297, and R319 contribute to the FMN site; these read RSS, NA, and KPTAS.

It belongs to the chorismate synthase family. As to quaternary structure, homotetramer. It depends on FMNH2 as a cofactor.

It catalyses the reaction 5-O-(1-carboxyvinyl)-3-phosphoshikimate = chorismate + phosphate. It participates in metabolic intermediate biosynthesis; chorismate biosynthesis; chorismate from D-erythrose 4-phosphate and phosphoenolpyruvate: step 7/7. Catalyzes the anti-1,4-elimination of the C-3 phosphate and the C-6 proR hydrogen from 5-enolpyruvylshikimate-3-phosphate (EPSP) to yield chorismate, which is the branch point compound that serves as the starting substrate for the three terminal pathways of aromatic amino acid biosynthesis. This reaction introduces a second double bond into the aromatic ring system. This Acinetobacter baumannii (strain ACICU) protein is Chorismate synthase.